We begin with the raw amino-acid sequence, 789 residues long: Glycerol-3-phosphate acyltransferase (789 aa).

Positions 275 to 280 (SHRSYI) match the HXXXXD motif motif.

Belongs to the GPAT/DAPAT family.

It is found in the cell membrane. It carries out the reaction sn-glycerol 3-phosphate + an acyl-CoA = a 1-acyl-sn-glycero-3-phosphate + CoA. It functions in the pathway phospholipid metabolism; CDP-diacylglycerol biosynthesis; CDP-diacylglycerol from sn-glycerol 3-phosphate: step 1/3. The chain is Glycerol-3-phosphate acyltransferase from Mycobacterium tuberculosis (strain ATCC 25177 / H37Ra).